The following is a 306-amino-acid chain: D-alanine--D-alanine ligase B (306 aa).

An ATP-grasp domain is found at 101 to 303 (KLLWQGAGLP…FSQLVVRILE (203 aa)). 134 to 189 (ISALGLPVIVKPSREGSSVGMSKVVAENALQDALRLAFQHDEEVLIEKWLSGPEFT) contacts ATP. Mg(2+)-binding residues include aspartate 257, glutamate 270, and asparagine 272.

This sequence belongs to the D-alanine--D-alanine ligase family. Requires Mg(2+) as cofactor. Mn(2+) is required as a cofactor.

Its subcellular location is the cytoplasm. It carries out the reaction 2 D-alanine + ATP = D-alanyl-D-alanine + ADP + phosphate + H(+). It participates in cell wall biogenesis; peptidoglycan biosynthesis. In terms of biological role, cell wall formation. The protein is D-alanine--D-alanine ligase B of Shigella flexneri.